A 312-amino-acid chain; its full sequence is ADP-L-glycero-D-manno-heptose-6-epimerase (312 aa).

NADP(+)-binding positions include 10 to 11 (FI), 31 to 32 (DN), lysine 38, lysine 53, 75 to 79 (EGACS), and asparagine 92. Residue tyrosine 140 is the Proton acceptor of the active site. Position 144 (lysine 144) interacts with NADP(+). Asparagine 169 lines the substrate pocket. 2 residues coordinate NADP(+): valine 170 and lysine 178. Residue lysine 178 is the Proton acceptor of the active site. Residues serine 180, histidine 187, 201-204 (FEGS), arginine 209, and tyrosine 274 each bind substrate.

Belongs to the NAD(P)-dependent epimerase/dehydratase family. HldD subfamily. As to quaternary structure, homopentamer. NADP(+) serves as cofactor.

It carries out the reaction ADP-D-glycero-beta-D-manno-heptose = ADP-L-glycero-beta-D-manno-heptose. It participates in nucleotide-sugar biosynthesis; ADP-L-glycero-beta-D-manno-heptose biosynthesis; ADP-L-glycero-beta-D-manno-heptose from D-glycero-beta-D-manno-heptose 7-phosphate: step 4/4. Functionally, catalyzes the interconversion between ADP-D-glycero-beta-D-manno-heptose and ADP-L-glycero-beta-D-manno-heptose via an epimerization at carbon 6 of the heptose. This Proteus mirabilis (strain HI4320) protein is ADP-L-glycero-D-manno-heptose-6-epimerase.